The sequence spans 858 residues: Sarcolemmal membrane-associated protein (858 aa).

Positions 1–165 (MPSALAIFTC…AANTPSMYSQ (165 aa)) are necessary for targeting to centrosomes. Residues 1–832 (MPSALAIFTC…REKGNNKPWP (832 aa)) lie on the Cytoplasmic side of the membrane. The region spanning 28–85 (IKIGRSVARCRPAQNNATFDCKVLSRNHALVWFDHKTSKFYLQDTKSSNGTFINSQRL) is the FHA domain. Position 150 is a phosphoserine (Ser-150). 2 coiled-coil regions span residues 169–204 (QLSQ…ASDT) and 232–381 (NQTE…ALQV). Over residues 456-470 (KLSKEENQAKAKESD) the composition is skewed to basic and acidic residues. A disordered region spans residues 456–492 (KLSKEENQAKAKESDLSDTLSPSKEKSSDDTTDDAQM). 2 positions are modified to phosphoserine: Ser-472 and Ser-476. The stretch at 516-829 (QAETEAKQDT…KLLREKGNNK (314 aa)) forms a coiled coil. Residues 833–853 (WMPMVAALVAVTAMVLYVPGL) form a helical; Anchor for type IV membrane protein membrane-spanning segment. At 854–858 (ARASP) the chain is on the extracellular side.

It belongs to the SLMAP family. Homodimer. Interacts with myosin. Interacts with SIKE1 and both associate with the STRIPAK core complex composed of PP2A catalytic and scaffolding subunits, the striatins (PP2A regulatory subunits), the striatin-associated proteins MOB4, STRIP1 and STRIP2, PDCD10 and members of the STE20 kinases, such as STK24 and STK26. Interacts (via FHA domain) with STK3 (when phosphorylated); the interaction associates STK3 with the STRIPAK complex.

It localises to the cell membrane. The protein localises to the sarcolemma. The protein resides in the cytoplasm. Its subcellular location is the cytoskeleton. It is found in the microtubule organizing center. It localises to the centrosome. The protein localises to the endoplasmic reticulum membrane. The protein resides in the mitochondrion membrane. Its function is as follows. Associates with the striatin-interacting phosphatase and kinase (STRIPAK) core complex, forming the extended (SIKE1:SLMAP)STRIPAK complex. The (SIKE1:SLMAP)STRIPAK complex dephosphorylates STK3 leading to the inhibition of Hippo signaling and the control of cell growth. May play a role during myoblast fusion. The protein is Sarcolemmal membrane-associated protein (Slmap) of Rattus norvegicus (Rat).